The sequence spans 584 residues: Membrane frizzled-related protein (584 aa).

The Cytoplasmic portion of the chain corresponds to 1 to 69; sequence MKDYDDVILR…QPDCHFSWFC (69 aa). The helical; Signal-anchor for type II membrane protein transmembrane segment at 70–90 threads the bilayer; that stretch reads ILLLSGLLLLLLGLLVAVILA. Residues 91–584 lie on the Extracellular side of the membrane; it reads QLQATSLPRT…AASLEACSQP (494 aa). The interval 108 to 140 is disordered; it reads RGLTPMGVIPSTTPNTTTTTTTTTPARTGQQEA. Positions 119 to 132 are enriched in low complexity; sequence TTPNTTTTTTTTTP. 2 disulfides stabilise this stretch: Cys-150-Cys-176 and Cys-203-Cys-222. In terms of domain architecture, CUB 1 spans 150–259; the sequence is CGGLLPGPSG…SGFQAWYQAV (110 aa). An N-linked (GlcNAc...) asparagine glycan is attached at Asn-233. Residues 265 to 301 enclose the LDL-receptor class A 1 domain; it reads SCAHNEFHCDLLLCLKRDSVCDGITECADGSDEANCS. 5 cysteine pairs are disulfide-bonded: Cys-266/Cys-278, Cys-273/Cys-291, Cys-285/Cys-300, Cys-307/Cys-333, and Cys-360/Cys-383. The 114-residue stretch at 307–420 folds into the CUB 2 domain; the sequence is CGGNLTGLYG…GGFLATYQAI (114 aa). A glycan (N-linked (GlcNAc...) asparagine) is linked at Asn-421. Residues 426–460 form the LDL-receptor class A 2 domain; the sequence is GCPWAEFCQSGGYRDLQWMCDLWKDCANDSNDNCS. 7 cysteine pairs are disulfide-bonded: Cys-433–Cys-451, Cys-445–Cys-459, Cys-471–Cys-533, Cys-479–Cys-526, Cys-517–Cys-554, Cys-543–Cys-581, and Cys-547–Cys-569. The N-linked (GlcNAc...) asparagine glycan is linked to Asn-458. One can recognise an FZ domain in the interval 466 to 584; the sequence is QPDLTCEPVQ…AASLEACSQP (119 aa).

In terms of assembly, interacts with C1QTNF5. As to expression, expressed in retinal pigment epithelium and ciliary epithelium of the eye.

It localises to the apical cell membrane. Its function is as follows. May play a role in eye development. The protein is Membrane frizzled-related protein (Mfrp) of Mus musculus (Mouse).